Here is a 1179-residue protein sequence, read N- to C-terminus: RecBCD enzyme subunit RecB (1179 aa).

The segment at M1–Y859 is DNA-binding and helicase activity, interacts with RecC. A UvrD-like helicase ATP-binding domain is found at N18–S459. A39–T46 contributes to the ATP binding site. The UvrD-like helicase C-terminal domain maps to E485–G755. The tract at residues Y910–K1179 is nuclease activity, interacts with RecD and RecA. Mg(2+) contacts are provided by H962, D1073, and D1086. D1086 functions as the For nuclease activity in the catalytic mechanism.

It belongs to the helicase family. UvrD subfamily. In terms of assembly, heterotrimer of RecB, RecC and RecD. All subunits contribute to DNA-binding. Interacts with RecA. Mg(2+) is required as a cofactor.

It catalyses the reaction Exonucleolytic cleavage (in the presence of ATP) in either 5'- to 3'- or 3'- to 5'-direction to yield 5'-phosphooligonucleotides.. It carries out the reaction Couples ATP hydrolysis with the unwinding of duplex DNA by translocating in the 3'-5' direction.. The enzyme catalyses ATP + H2O = ADP + phosphate + H(+). In terms of biological role, a helicase/nuclease that prepares dsDNA breaks (DSB) for recombinational DNA repair. Binds to DSBs and unwinds DNA via a highly rapid and processive ATP-dependent bidirectional helicase activity. Unwinds dsDNA until it encounters a Chi (crossover hotspot instigator) sequence from the 3' direction. Cuts ssDNA a few nucleotides 3' to the Chi site. The properties and activities of the enzyme are changed at Chi. The Chi-altered holoenzyme produces a long 3'-ssDNA overhang and facilitates RecA-binding to the ssDNA for homologous DNA recombination and repair. Holoenzyme degrades any linearized DNA that is unable to undergo homologous recombination. In the holoenzyme this subunit contributes ATPase, 3'-5' helicase, exonuclease activity and loads RecA onto ssDNA. The chain is RecBCD enzyme subunit RecB from Buchnera aphidicola subsp. Schizaphis graminum (strain Sg).